The following is a 340-amino-acid chain: MYG1 protein C27H6.8 (340 aa).

Belongs to the MYG1 family.

The sequence is that of MYG1 protein C27H6.8 from Caenorhabditis elegans.